We begin with the raw amino-acid sequence, 39 residues long: Large ribosomal subunit protein bL36 (39 aa).

The protein belongs to the bacterial ribosomal protein bL36 family.

This Levilactobacillus brevis (strain ATCC 367 / BCRC 12310 / CIP 105137 / JCM 1170 / LMG 11437 / NCIMB 947 / NCTC 947) (Lactobacillus brevis) protein is Large ribosomal subunit protein bL36.